Reading from the N-terminus, the 259-residue chain is Adenosylcobinamide-GDP ribazoletransferase (259 aa).

A run of 7 helical transmembrane segments spans residues 36-56, 65-85, 108-128, 133-153, 175-195, 201-221, and 238-258; these read FSPLIGVLIGVLQVSVLILLL, MPFIAIALGLWITGGIHVDGL, IGASGIIALTINLLLQIAALF, LILFAIPIASFWGRYSQIWAI, GFLIESIPSYAFLSFLIFILI, IISTPNLIIGIIVGFLPALII, and GASVVLVETCMLIIFSIILPA.

This sequence belongs to the CobS family. Requires Mg(2+) as cofactor.

The protein localises to the cell inner membrane. The enzyme catalyses alpha-ribazole + adenosylcob(III)inamide-GDP = adenosylcob(III)alamin + GMP + H(+). The catalysed reaction is alpha-ribazole 5'-phosphate + adenosylcob(III)inamide-GDP = adenosylcob(III)alamin 5'-phosphate + GMP + H(+). It functions in the pathway cofactor biosynthesis; adenosylcobalamin biosynthesis; adenosylcobalamin from cob(II)yrinate a,c-diamide: step 7/7. In terms of biological role, joins adenosylcobinamide-GDP and alpha-ribazole to generate adenosylcobalamin (Ado-cobalamin). Also synthesizes adenosylcobalamin 5'-phosphate from adenosylcobinamide-GDP and alpha-ribazole 5'-phosphate. This is Adenosylcobinamide-GDP ribazoletransferase from Prochlorococcus marinus (strain SARG / CCMP1375 / SS120).